Consider the following 279-residue polypeptide: NADPH-dependent 7-cyano-7-deazaguanine reductase (279 aa).

86-88 contacts substrate; the sequence is IES. 88-89 provides a ligand contact to NADPH; sequence SK. Cys187 functions as the Thioimide intermediate in the catalytic mechanism. Asp194 functions as the Proton donor in the catalytic mechanism. 226 to 227 is a binding site for substrate; it reads HE. Residue 255 to 256 participates in NADPH binding; the sequence is RG.

Belongs to the GTP cyclohydrolase I family. QueF type 2 subfamily. As to quaternary structure, homodimer.

It localises to the cytoplasm. The catalysed reaction is 7-aminomethyl-7-carbaguanine + 2 NADP(+) = 7-cyano-7-deazaguanine + 2 NADPH + 3 H(+). Its pathway is tRNA modification; tRNA-queuosine biosynthesis. Its function is as follows. Catalyzes the NADPH-dependent reduction of 7-cyano-7-deazaguanine (preQ0) to 7-aminomethyl-7-deazaguanine (preQ1). In Actinobacillus pleuropneumoniae serotype 5b (strain L20), this protein is NADPH-dependent 7-cyano-7-deazaguanine reductase.